We begin with the raw amino-acid sequence, 362 residues long: 2-aminoethylphosphonate--pyruvate transaminase (362 aa).

N6-(pyridoxal phosphate)lysine is present on Lys-193.

It belongs to the class-V pyridoxal-phosphate-dependent aminotransferase family. PhnW subfamily. Homodimer. The cofactor is pyridoxal 5'-phosphate.

The catalysed reaction is (2-aminoethyl)phosphonate + pyruvate = phosphonoacetaldehyde + L-alanine. Involved in phosphonate degradation. The protein is 2-aminoethylphosphonate--pyruvate transaminase of Bacteroides fragilis (strain ATCC 25285 / DSM 2151 / CCUG 4856 / JCM 11019 / LMG 10263 / NCTC 9343 / Onslow / VPI 2553 / EN-2).